A 250-amino-acid polypeptide reads, in one-letter code: 5'-nucleotidase SurE (250 aa).

A divalent metal cation-binding residues include Asp9, Asp10, Ser40, and Asn92.

The protein belongs to the SurE nucleotidase family. A divalent metal cation is required as a cofactor.

Its subcellular location is the cytoplasm. The catalysed reaction is a ribonucleoside 5'-phosphate + H2O = a ribonucleoside + phosphate. Its function is as follows. Nucleotidase that shows phosphatase activity on nucleoside 5'-monophosphates. This is 5'-nucleotidase SurE from Shewanella pealeana (strain ATCC 700345 / ANG-SQ1).